We begin with the raw amino-acid sequence, 72 residues long: Exodeoxyribonuclease 7 small subunit (72 aa).

It belongs to the XseB family. In terms of assembly, heterooligomer composed of large and small subunits.

It is found in the cytoplasm. It catalyses the reaction Exonucleolytic cleavage in either 5'- to 3'- or 3'- to 5'-direction to yield nucleoside 5'-phosphates.. Functionally, bidirectionally degrades single-stranded DNA into large acid-insoluble oligonucleotides, which are then degraded further into small acid-soluble oligonucleotides. This chain is Exodeoxyribonuclease 7 small subunit, found in Clostridium kluyveri (strain NBRC 12016).